The chain runs to 530 residues: ATP synthase subunit alpha (530 aa).

169-176 contributes to the ATP binding site; it reads GDRQTGKT.

The protein belongs to the ATPase alpha/beta chains family. In terms of assembly, F-type ATPases have 2 components, CF(1) - the catalytic core - and CF(0) - the membrane proton channel. CF(1) has five subunits: alpha(3), beta(3), gamma(1), delta(1), epsilon(1). CF(0) has three main subunits: a(1), b(2) and c(9-12). The alpha and beta chains form an alternating ring which encloses part of the gamma chain. CF(1) is attached to CF(0) by a central stalk formed by the gamma and epsilon chains, while a peripheral stalk is formed by the delta and b chains.

The protein localises to the cell membrane. It carries out the reaction ATP + H2O + 4 H(+)(in) = ADP + phosphate + 5 H(+)(out). Produces ATP from ADP in the presence of a proton gradient across the membrane. The alpha chain is a regulatory subunit. The sequence is that of ATP synthase subunit alpha from Mycoplasmopsis synoviae (strain 53) (Mycoplasma synoviae).